We begin with the raw amino-acid sequence, 543 residues long: NADH-ubiquinone oxidoreductase chain 4 (543 aa).

A run of 14 helical transmembrane segments spans residues 5–25 (FLMF…IIWS), 84–104 (VVAF…YILF), 129–149 (VDGI…IALM), 161–181 (SYLI…LVLD), 182–202 (ILLF…LIGL), 213–233 (FYIF…ILTM), 254–274 (IQIF…PTIF), 287–307 (PLGG…YGIF), 321–341 (YTYI…FSTL), 350–370 (IAYS…SNTI), 377–397 (ILLG…VGGV), 416–436 (MAPL…GVPL), 456–476 (LLGL…IFLF), and 501–521 (FYAL…PSII).

This sequence belongs to the complex I subunit 4 family.

It localises to the mitochondrion membrane. The catalysed reaction is a ubiquinone + NADH + 5 H(+)(in) = a ubiquinol + NAD(+) + 4 H(+)(out). Functionally, core subunit of the mitochondrial membrane respiratory chain NADH dehydrogenase (Complex I) that is believed to belong to the minimal assembly required for catalysis. Complex I functions in the transfer of electrons from NADH to the respiratory chain. The immediate electron acceptor for the enzyme is believed to be ubiquinone. The sequence is that of NADH-ubiquinone oxidoreductase chain 4 (ndh-4) from Neurospora crassa (strain ATCC 24698 / 74-OR23-1A / CBS 708.71 / DSM 1257 / FGSC 987).